The primary structure comprises 669 residues: Epithelial sodium channel subunit alpha (669 aa).

The disordered stretch occupies residues 1–43; it reads MEGNKLEEQDSSPPQSTPGLMKGNKREEQGLGPEPAAPQQPTA. Residues 1 to 85 are Cytoplasmic-facing; sequence MEGNKLEEQD…CSQHNRMKTA (85 aa). A compositionally biased stretch (low complexity) spans 33–42; that stretch reads PEPAAPQQPT. Residues 86–106 traverse the membrane as a helical segment; that stretch reads FWAVLWLCTFGMMYWQFGLLF. Residues 107 to 562 are Extracellular-facing; that stretch reads GEYFSYPVSL…SQWSLWFGSS (456 aa). 10 disulfides stabilise this stretch: Cys133–Cys305, Cys229–Cys236, Cys282–Cys289, Cys394–Cys479, Cys416–Cys456, Cys416–Cys475, Cys420–Cys471, Cys429–Cys456, Cys429–Cys479, and Cys431–Cys445. A gating release of inhibition by proteolysis (GRIP); protease-sensitive region that is responsible for the proteolytic activation of the channel region spans residues 175-243; sequence RSRRDLRGTL…SDCFYQTYSS (69 aa). A helical transmembrane segment spans residues 563-583; sequence VLSVVEMAELVFDLLVIMFLM. Over 584–669 the chain is Cytoplasmic; sequence LLRRFRSRYW…SSSTCPLGGP (86 aa). The interval 620-669 is disordered; sequence HPMSLSLSQPGPAPSPALTAPPPAYATLGPRPSPGGSAGASSSTCPLGGP. Positions 630–643 are enriched in pro residues; that stretch reads GPAPSPALTAPPPA. Residues 640 to 644 carry the PY motif; recruits WW domain-containing proteins and is thereby required for ubiquitination and inhibition of the channel by NEDD4 and NEDD4L motif; that stretch reads PPPAY.

This sequence belongs to the amiloride-sensitive sodium channel (TC 1.A.6) family. SCNN1A subfamily. As to quaternary structure, heterotrimer; containing an alpha/SCNN1A, a beta/SCNN1B and a gamma/SCNN1G subunit. Interacts with WWP1 (via WW domains). Interacts with WWP2 (via WW domains); inhibits the channel. Interacts with BPIFA1; the interaction is indirect via SCNN1B and inhibits the proteolytic processing of SCNN1A and SCNN1G and the activation of ENaC. Interacts with the full-length immature form of PCSK9 (pro-PCSK9); inhibits ENaC by promoting its proteasomal degradation. Ubiquitinated. Can be ubiquitinated at multiple sites and undergo monoubiquitination and polyubiquitination. Ubiquitination by NEDD4 or NEDD4L inhibits the ENaC channel through endocytosis, intracellular retention and degradation of its individual subunits. Post-translationally, ENaC is activated through the proteolytic maturation of its subunits. Furin cleaves the SCNN1A subunit, which results in a stepwise increase in the open probability of the channel due to the release of an inhibitory tract. BPIFA1, which is recruited by the SCNN1B subunit, prevents the proteolytic activation of ENaC. In terms of processing, N-glycosylated. In terms of tissue distribution, expressed in the female reproductive tract, from the fimbrial end of the fallopian tube to the endometrium (at protein level). Expressed in kidney (at protein level). In the respiratory tract, expressed in the bronchial epithelium (at protein level). Highly expressed in lung. Detected at intermediate levels in pancreas and liver, and at low levels in heart and placenta. in skin, expressed in keratinocytes, melanocytes and Merkel cells of the epidermal sub-layers, stratum basale, stratum spinosum and stratum granulosum (at protein level). Expressed in the outer root sheath of the hair follicles (at protein level). Detected in both peripheral and central cells of the sebaceous gland (at protein level). Expressed by eccrine sweat glands (at protein level). In skin, also expressed by arrector pili muscle cells and intradermal adipocytes. Isoform 1 and isoform 2 predominate in all tissues. Detected in lung and heart.

The protein localises to the apical cell membrane. It is found in the cell projection. The protein resides in the cilium. Its subcellular location is the cytoplasmic granule. It localises to the cytoplasm. The protein localises to the cytoplasmic vesicle. It is found in the secretory vesicle. The protein resides in the acrosome. Its subcellular location is the flagellum. The enzyme catalyses Na(+)(in) = Na(+)(out). Its activity is regulated as follows. Originally identified and characterized by its inhibition by the diuretic drug amiloride. Inhibited by phenamil. Functionally, this is one of the three pore-forming subunits of the heterotrimeric epithelial sodium channel (ENaC), a critical regulator of sodium balance and fluid homeostasis. ENaC operates in epithelial tissues, where it mediates the electrodiffusion of sodium ions from extracellular fluid through the apical membrane of cells, with water following osmotically. It plays a key role in maintaining sodium homeostasis through electrogenic sodium reabsorption in the kidneys. Additionally, ENaC is essential for airway surface liquid homeostasis, which is crucial for proper mucus clearance. In terms of biological role, not functional. This chain is Epithelial sodium channel subunit alpha, found in Homo sapiens (Human).